Consider the following 451-residue polypeptide: Phosphoglucosamine mutase (451 aa).

Catalysis depends on S107, which acts as the Phosphoserine intermediate. Positions 107, 246, 248, and 250 each coordinate Mg(2+). S107 is subject to Phosphoserine.

It belongs to the phosphohexose mutase family. It depends on Mg(2+) as a cofactor. In terms of processing, activated by phosphorylation.

The catalysed reaction is alpha-D-glucosamine 1-phosphate = D-glucosamine 6-phosphate. Catalyzes the conversion of glucosamine-6-phosphate to glucosamine-1-phosphate. In Burkholderia vietnamiensis (strain G4 / LMG 22486) (Burkholderia cepacia (strain R1808)), this protein is Phosphoglucosamine mutase.